A 343-amino-acid polypeptide reads, in one-letter code: Multidrug resistance protein MdtN (343 aa).

Residues 1 to 12 (MESTPKKAPRSK) are Cytoplasmic-facing. A helical; Signal-anchor for type II membrane protein transmembrane segment spans residues 13–33 (FPALLVVALALVALVFVIWRV). At 34 to 343 (DSAPSTNDAY…ASAVANLEPQ (310 aa)) the chain is on the periplasmic side.

This sequence belongs to the membrane fusion protein (MFP) (TC 8.A.1) family. Could be part of a tripartite efflux system composed of MdtN, MdtO and MdtP.

It localises to the cell inner membrane. Could be involved in resistance to puromycin, acriflavine and tetraphenylarsonium chloride. This is Multidrug resistance protein MdtN (mdtN) from Escherichia coli O6:H1 (strain CFT073 / ATCC 700928 / UPEC).